A 306-amino-acid polypeptide reads, in one-letter code: Pantothenate kinase (306 aa).

Residue 91 to 98 (GSVAVGKS) coordinates ATP.

This sequence belongs to the prokaryotic pantothenate kinase family.

It is found in the cytoplasm. It catalyses the reaction (R)-pantothenate + ATP = (R)-4'-phosphopantothenate + ADP + H(+). It participates in cofactor biosynthesis; coenzyme A biosynthesis; CoA from (R)-pantothenate: step 1/5. The protein is Pantothenate kinase of Streptococcus equi subsp. zooepidemicus (strain H70).